A 62-amino-acid polypeptide reads, in one-letter code: Large ribosomal subunit protein uL30 (62 aa).

Belongs to the universal ribosomal protein uL30 family. Part of the 50S ribosomal subunit.

The protein is Large ribosomal subunit protein uL30 of Shewanella frigidimarina (strain NCIMB 400).